Reading from the N-terminus, the 392-residue chain is Sulfate adenylyltransferase (392 aa).

It belongs to the sulfate adenylyltransferase family.

The enzyme catalyses sulfate + ATP + H(+) = adenosine 5'-phosphosulfate + diphosphate. Its pathway is sulfur metabolism; hydrogen sulfide biosynthesis; sulfite from sulfate: step 1/3. The polypeptide is Sulfate adenylyltransferase (Trichormus variabilis (strain ATCC 29413 / PCC 7937) (Anabaena variabilis)).